Consider the following 418-residue polypeptide: Tektin-1 (418 aa).

4 coiled-coil regions span residues 21–107 (KNQY…TLKE), 134–177 (HELI…DLKD), 266–308 (NGLK…DQEG), and 333–384 (AQYR…NTIY).

The protein belongs to the tektin family. Microtubule inner protein component of sperm flagellar doublet microtubules. In terms of processing, ubiquitinated, leading to its degradation. Deubiquitinated by USP16, promoting its stability. Predominantly expressed in testis. Expressed in airway epithelial cells.

The protein localises to the cytoplasm. It localises to the cytoskeleton. Its subcellular location is the cilium axoneme. The protein resides in the flagellum axoneme. Functionally, microtubule inner protein (MIP) part of the dynein-decorated doublet microtubules (DMTs) in cilia and flagellar axoneme. Forms filamentous polymers in the walls of ciliary and flagellar microtubules. This chain is Tektin-1 (TEKT1), found in Homo sapiens (Human).